The following is a 304-amino-acid chain: Acetyl-coenzyme A carboxylase carboxyl transferase subunit beta (304 aa).

A CoA carboxyltransferase N-terminal domain is found at 23–292 (VWTKCDSCGQ…PNPDAPREGV (270 aa)). Zn(2+) is bound by residues Cys27, Cys30, Cys46, and Cys49. The C4-type zinc-finger motif lies at 27–49 (CDSCGQVLYRAELERNLEVCPKC). Residues 283–304 (PNPDAPREGVVVPPAPDQESEA) are disordered.

The protein belongs to the AccD/PCCB family. In terms of assembly, acetyl-CoA carboxylase is a heterohexamer composed of biotin carboxyl carrier protein (AccB), biotin carboxylase (AccC) and two subunits each of ACCase subunit alpha (AccA) and ACCase subunit beta (AccD). It depends on Zn(2+) as a cofactor.

The protein localises to the cytoplasm. The catalysed reaction is N(6)-carboxybiotinyl-L-lysyl-[protein] + acetyl-CoA = N(6)-biotinyl-L-lysyl-[protein] + malonyl-CoA. It functions in the pathway lipid metabolism; malonyl-CoA biosynthesis; malonyl-CoA from acetyl-CoA: step 1/1. Component of the acetyl coenzyme A carboxylase (ACC) complex. Biotin carboxylase (BC) catalyzes the carboxylation of biotin on its carrier protein (BCCP) and then the CO(2) group is transferred by the transcarboxylase to acetyl-CoA to form malonyl-CoA. This is Acetyl-coenzyme A carboxylase carboxyl transferase subunit beta from Salmonella agona (strain SL483).